The primary structure comprises 146 residues: Pre-mRNA-splicing factor cwf14 (146 aa).

The protein belongs to the BUD31 (G10) family. Belongs to the 40S cdc5-associated complex (or cwf complex), a spliceosome sub-complex reminiscent of a late-stage spliceosome composed of the U2, U5 and U6 snRNAs and at least brr2, cdc5, cwf2/prp3, cwf3/syf1, cwf4/syf3, cwf5/ecm2, spp42/cwf6, cwf7/spf27, cwf8, cwf9, cwf10, cwf11, cwf12, prp45/cwf13, cwf14, cwf15, cwf16, cwf17, cwf18, cwf19, cwf20, cwf21, cwf22, cwf23, cwf24, cwf25, cwf26, cyp7/cwf27, cwf28, cwf29/ist3, lea1, msl1, prp5/cwf1, prp10, prp12/sap130, prp17, prp22, sap61, sap62, sap114, sap145, slu7, smb1, smd1, smd3, smf1, smg1 and syf2.

It localises to the nucleus. Its function is as follows. Involved in mRNA splicing where it associates with cdc5 and the other cwf proteins as part of the spliceosome. This chain is Pre-mRNA-splicing factor cwf14 (cwf14), found in Schizosaccharomyces pombe (strain 972 / ATCC 24843) (Fission yeast).